We begin with the raw amino-acid sequence, 181 residues long: Large ribosomal subunit protein uL5 (181 aa).

The protein belongs to the universal ribosomal protein uL5 family. In terms of assembly, part of the 50S ribosomal subunit; part of the 5S rRNA/L5/L18/L25 subcomplex. Contacts the 5S rRNA and the P site tRNA. Forms a bridge to the 30S subunit in the 70S ribosome.

Its function is as follows. This is one of the proteins that bind and probably mediate the attachment of the 5S RNA into the large ribosomal subunit, where it forms part of the central protuberance. In the 70S ribosome it contacts protein S13 of the 30S subunit (bridge B1b), connecting the 2 subunits; this bridge is implicated in subunit movement. Contacts the P site tRNA; the 5S rRNA and some of its associated proteins might help stabilize positioning of ribosome-bound tRNAs. This Sulfurovum sp. (strain NBC37-1) protein is Large ribosomal subunit protein uL5.